Here is a 315-residue protein sequence, read N- to C-terminus: Outer membrane protease OmpP (315 aa).

The signal sequence occupies residues 1–23 (MQTKLLAIMLAAPVVFSSQEASA). Active-site residues include Asp-103, Asp-105, Asp-230, and His-232.

The protein belongs to the peptidase A26 family.

It localises to the cell outer membrane. Its function is as follows. Protease; also acts as a receptor for bacteriophage Ox2. The polypeptide is Outer membrane protease OmpP (ompP) (Escherichia coli (strain K12)).